A 511-amino-acid polypeptide reads, in one-letter code: Lysine--tRNA ligase (511 aa).

Mg(2+) contacts are provided by glutamate 421 and glutamate 428.

Belongs to the class-II aminoacyl-tRNA synthetase family. Homodimer. Requires Mg(2+) as cofactor.

It localises to the cytoplasm. The catalysed reaction is tRNA(Lys) + L-lysine + ATP = L-lysyl-tRNA(Lys) + AMP + diphosphate. This Herminiimonas arsenicoxydans protein is Lysine--tRNA ligase.